The chain runs to 303 residues: Aspartate carbamoyltransferase catalytic subunit (303 aa).

Carbamoyl phosphate contacts are provided by arginine 51 and threonine 52. Lysine 80 contacts L-aspartate. The carbamoyl phosphate site is built by arginine 101, histidine 129, and glutamine 132. 2 residues coordinate L-aspartate: arginine 162 and arginine 221. Residues leucine 260 and proline 261 each contribute to the carbamoyl phosphate site.

This sequence belongs to the aspartate/ornithine carbamoyltransferase superfamily. ATCase family. Heterooligomer of catalytic and regulatory chains.

It catalyses the reaction carbamoyl phosphate + L-aspartate = N-carbamoyl-L-aspartate + phosphate + H(+). It participates in pyrimidine metabolism; UMP biosynthesis via de novo pathway; (S)-dihydroorotate from bicarbonate: step 2/3. Its function is as follows. Catalyzes the condensation of carbamoyl phosphate and aspartate to form carbamoyl aspartate and inorganic phosphate, the committed step in the de novo pyrimidine nucleotide biosynthesis pathway. This chain is Aspartate carbamoyltransferase catalytic subunit, found in Saccharolobus islandicus (strain Y.N.15.51 / Yellowstone #2) (Sulfolobus islandicus).